A 439-amino-acid chain; its full sequence is Xylose isomerase (439 aa).

Residues His-101 and Asp-104 contribute to the active site. Mg(2+)-binding residues include Glu-232, Glu-268, His-271, Asp-296, Asp-307, Asp-309, and Asp-339.

It belongs to the xylose isomerase family. As to quaternary structure, homotetramer. Mg(2+) serves as cofactor.

It is found in the cytoplasm. It carries out the reaction alpha-D-xylose = alpha-D-xylulofuranose. This chain is Xylose isomerase, found in Serratia proteamaculans (strain 568).